Consider the following 361-residue polypeptide: Phospho-N-acetylmuramoyl-pentapeptide-transferase (361 aa).

10 helical membrane passes run 21–41 (YLTVRAILALFTALLLSLWIG), 74–94 (MGGIMILFAIGVSTLLWANLA), 97–117 (YVWFCLFVLFGYGAVGFVDDY), 132–152 (WKYFWLSVIALISAFGMYAIG), 168–188 (VMPQLGLFYIVLAYFVIVGTG), 199–219 (GLAIMPTVFVAAAFALIAWAT), 239–259 (LVIFCTAIVGAGLGFLWFNTY), 264–284 (FMGDVGSLALGGVLGTIAVLV), 288–308 (FLLVIMGGVFVVETLSVILQV), and 339–359 (VIIRFWIISLMLVLLGLITLK).

It belongs to the glycosyltransferase 4 family. MraY subfamily. The cofactor is Mg(2+).

The protein resides in the cell inner membrane. It catalyses the reaction UDP-N-acetyl-alpha-D-muramoyl-L-alanyl-gamma-D-glutamyl-meso-2,6-diaminopimeloyl-D-alanyl-D-alanine + di-trans,octa-cis-undecaprenyl phosphate = di-trans,octa-cis-undecaprenyl diphospho-N-acetyl-alpha-D-muramoyl-L-alanyl-D-glutamyl-meso-2,6-diaminopimeloyl-D-alanyl-D-alanine + UMP. The protein operates within cell wall biogenesis; peptidoglycan biosynthesis. Its function is as follows. Catalyzes the initial step of the lipid cycle reactions in the biosynthesis of the cell wall peptidoglycan: transfers peptidoglycan precursor phospho-MurNAc-pentapeptide from UDP-MurNAc-pentapeptide onto the lipid carrier undecaprenyl phosphate, yielding undecaprenyl-pyrophosphoryl-MurNAc-pentapeptide, known as lipid I. The chain is Phospho-N-acetylmuramoyl-pentapeptide-transferase from Histophilus somni (strain 129Pt) (Haemophilus somnus).